A 286-amino-acid chain; its full sequence is uncharacterized protein (286 aa).

A Radical SAM core domain is found at 36 to 256; sequence ENPQHHPSIE…IKGCLLVQLK (221 aa). [4Fe-4S] cluster-binding residues include Cys-50, Cys-54, and Cys-57.

[4Fe-4S] cluster serves as cofactor.

This is an uncharacterized protein from Methanocaldococcus jannaschii (strain ATCC 43067 / DSM 2661 / JAL-1 / JCM 10045 / NBRC 100440) (Methanococcus jannaschii).